The primary structure comprises 349 residues: GTPase Obg (349 aa).

An Obg domain is found at 1–159 (MKFLDEAKVY…RWIWLRLKLI (159 aa)). In terms of domain architecture, OBG-type G spans 160-327 (ADAGLVGLPN…ALRALVEVIG (168 aa)). GTP-binding positions include 166–173 (GLPNAGKS), 191–195 (FTTLH), 212–215 (DIPG), 279–282 (NKID), and 308–310 (SGV). Mg(2+)-binding residues include Ser173 and Thr193.

The protein belongs to the TRAFAC class OBG-HflX-like GTPase superfamily. OBG GTPase family. As to quaternary structure, monomer. It depends on Mg(2+) as a cofactor.

The protein resides in the cytoplasm. In terms of biological role, an essential GTPase which binds GTP, GDP and possibly (p)ppGpp with moderate affinity, with high nucleotide exchange rates and a fairly low GTP hydrolysis rate. Plays a role in control of the cell cycle, stress response, ribosome biogenesis and in those bacteria that undergo differentiation, in morphogenesis control. The protein is GTPase Obg of Rhodopseudomonas palustris (strain BisB18).